An 80-amino-acid chain; its full sequence is MENLNMDLLYIAAAMMMGLAAIGASIGIGILGGKFLEGAARQPDLIPVLRTQFFIVMGLVDAIPMIAVGLGLYVMFAVAG.

Transmembrane regions (helical) follow at residues 11–31 and 53–73; these read IAAA…IGIL and FFIV…LGLY.

This sequence belongs to the ATPase C chain family. F-type ATPases have 2 components, F(1) - the catalytic core - and F(0) - the membrane proton channel. F(1) has five subunits: alpha(3), beta(3), gamma(1), delta(1), epsilon(1). F(0) has three main subunits: a(1), b(2) and c(10-14). The alpha and beta chains form an alternating ring which encloses part of the gamma chain. F(1) is attached to F(0) by a central stalk formed by the gamma and epsilon chains, while a peripheral stalk is formed by the delta and b chains.

Its subcellular location is the cell inner membrane. F(1)F(0) ATP synthase produces ATP from ADP in the presence of a proton or sodium gradient. F-type ATPases consist of two structural domains, F(1) containing the extramembraneous catalytic core and F(0) containing the membrane proton channel, linked together by a central stalk and a peripheral stalk. During catalysis, ATP synthesis in the catalytic domain of F(1) is coupled via a rotary mechanism of the central stalk subunits to proton translocation. Functionally, key component of the F(0) channel; it plays a direct role in translocation across the membrane. A homomeric c-ring of between 10-14 subunits forms the central stalk rotor element with the F(1) delta and epsilon subunits. In Aeromonas hydrophila subsp. hydrophila (strain ATCC 7966 / DSM 30187 / BCRC 13018 / CCUG 14551 / JCM 1027 / KCTC 2358 / NCIMB 9240 / NCTC 8049), this protein is ATP synthase subunit c.